Reading from the N-terminus, the 328-residue chain is H-2 class I histocompatibility antigen, K-Q alpha chain (328 aa).

The tract at residues 1–71 (PRFISVGYVD…LLRYYNQSAG (71 aa)) is alpha-1. Residues 1-265 (PRFISVGYVD…EPPPSAVSNT (265 aa)) lie on the Extracellular side of the membrane. A glycan (N-linked (GlcNAc...) asparagine) is linked at asparagine 67. Positions 72 to 163 (GSHTIQRMYG…KNGNATLLRT (92 aa)) are alpha-2. Cysteine 82 and cysteine 145 are joined by a disulfide. Residue asparagine 157 is glycosylated (N-linked (GlcNAc...) asparagine). Positions 164–255 (DSPKAHVTHH…GLPKPLTLRW (92 aa)) are alpha-3. The Ig-like C1-type domain occupies 166–252 (PKAHVTHHSR…YHQGLPKPLT (87 aa)). Cysteines 184 and 240 form a disulfide. The segment at 256 to 265 (EPPPSAVSNT) is connecting peptide. The chain crosses the membrane as a helical span at residues 266–289 (VIIAVLVVLGAAIVTGAVVAFVMM). Over 290–328 (RRRNTGGKGGDYALAPGSQTSDLSLPDCKVMVHDPHSLA) the chain is Cytoplasmic. Residues serine 310 and serine 313 each carry the phosphoserine modification.

It belongs to the MHC class I family. Heterodimer of an alpha chain and a beta chain (beta-2-microglobulin).

It is found in the membrane. Its function is as follows. Involved in the presentation of foreign antigens to the immune system. The polypeptide is H-2 class I histocompatibility antigen, K-Q alpha chain (H2-K1) (Mus musculus (Mouse)).